The following is a 200-amino-acid chain: 6,7-dimethyl-8-ribityllumazine synthase (200 aa).

Residues tryptophan 25, 59–61, and 119–121 each bind 5-amino-6-(D-ribitylamino)uracil; these read SWE and VLI. A (2S)-2-hydroxy-3-oxobutyl phosphate-binding site is contributed by 124–125; that stretch reads ET. Histidine 127 functions as the Proton donor in the catalytic mechanism. A 5-amino-6-(D-ribitylamino)uracil-binding site is contributed by phenylalanine 152. Arginine 166 contacts (2S)-2-hydroxy-3-oxobutyl phosphate.

The protein belongs to the DMRL synthase family. Homopentamer.

The enzyme catalyses (2S)-2-hydroxy-3-oxobutyl phosphate + 5-amino-6-(D-ribitylamino)uracil = 6,7-dimethyl-8-(1-D-ribityl)lumazine + phosphate + 2 H2O + H(+). It participates in cofactor biosynthesis; riboflavin biosynthesis; riboflavin from 2-hydroxy-3-oxobutyl phosphate and 5-amino-6-(D-ribitylamino)uracil: step 1/2. Functionally, catalyzes the formation of 6,7-dimethyl-8-ribityllumazine by condensation of 5-amino-6-(D-ribitylamino)uracil with 3,4-dihydroxy-2-butanone 4-phosphate. This is the penultimate step in the biosynthesis of riboflavin. In Pyricularia oryzae (strain 70-15 / ATCC MYA-4617 / FGSC 8958) (Rice blast fungus), this protein is 6,7-dimethyl-8-ribityllumazine synthase.